Reading from the N-terminus, the 380-residue chain is Queuine tRNA-ribosyltransferase (380 aa).

The active-site Proton acceptor is the D96. Residues D96–F100, D150, Q193, and G220 contribute to the substrate site. Residues G251–S257 are RNA binding. The active-site Nucleophile is the D270. Residues T275 to R279 form an RNA binding; important for wobble base 34 recognition region. Zn(2+) is bound by residues C308, C310, C313, and H339.

It belongs to the queuine tRNA-ribosyltransferase family. Homodimer. Within each dimer, one monomer is responsible for RNA recognition and catalysis, while the other monomer binds to the replacement base PreQ1. Requires Zn(2+) as cofactor.

It catalyses the reaction 7-aminomethyl-7-carbaguanine + guanosine(34) in tRNA = 7-aminomethyl-7-carbaguanosine(34) in tRNA + guanine. It functions in the pathway tRNA modification; tRNA-queuosine biosynthesis. Catalyzes the base-exchange of a guanine (G) residue with the queuine precursor 7-aminomethyl-7-deazaguanine (PreQ1) at position 34 (anticodon wobble position) in tRNAs with GU(N) anticodons (tRNA-Asp, -Asn, -His and -Tyr). Catalysis occurs through a double-displacement mechanism. The nucleophile active site attacks the C1' of nucleotide 34 to detach the guanine base from the RNA, forming a covalent enzyme-RNA intermediate. The proton acceptor active site deprotonates the incoming PreQ1, allowing a nucleophilic attack on the C1' of the ribose to form the product. After dissociation, two additional enzymatic reactions on the tRNA convert PreQ1 to queuine (Q), resulting in the hypermodified nucleoside queuosine (7-(((4,5-cis-dihydroxy-2-cyclopenten-1-yl)amino)methyl)-7-deazaguanosine). The sequence is that of Queuine tRNA-ribosyltransferase from Streptococcus pneumoniae (strain Taiwan19F-14).